The primary structure comprises 725 residues: Glyoxysomal fatty acid beta-oxidation multifunctional protein MFP-a (725 aa).

E119 serves as the catalytic Nucleophile. The active-site Proton acceptor is the E139. The short motif at 723-725 is the Microbody targeting signal element; the sequence is SRL.

This sequence in the N-terminal section; belongs to the enoyl-CoA hydratase/isomerase family. The protein in the central section; belongs to the 3-hydroxyacyl-CoA dehydrogenase family.

Its subcellular location is the glyoxysome. It carries out the reaction a (3S)-3-hydroxyacyl-CoA = a (2E)-enoyl-CoA + H2O. The enzyme catalyses a 4-saturated-(3S)-3-hydroxyacyl-CoA = a (3E)-enoyl-CoA + H2O. The catalysed reaction is a (3Z)-enoyl-CoA = a 4-saturated (2E)-enoyl-CoA. It catalyses the reaction a (3E)-enoyl-CoA = a 4-saturated (2E)-enoyl-CoA. It carries out the reaction (3S)-3-hydroxybutanoyl-CoA = (3R)-3-hydroxybutanoyl-CoA. The enzyme catalyses a (3S)-3-hydroxyacyl-CoA + NAD(+) = a 3-oxoacyl-CoA + NADH + H(+). The protein operates within lipid metabolism; fatty acid beta-oxidation. This is Glyoxysomal fatty acid beta-oxidation multifunctional protein MFP-a from Brassica napus (Rape).